We begin with the raw amino-acid sequence, 400 residues long: Enolase (400 aa).

Q153 provides a ligand contact to (2R)-2-phosphoglycerate. E195 serves as the catalytic Proton donor. The Mg(2+) site is built by D231, E274, and D301. The (2R)-2-phosphoglycerate site is built by K326, R355, S356, and K377. Residue K326 is the Proton acceptor of the active site.

Belongs to the enolase family. The cofactor is Mg(2+).

It localises to the cytoplasm. Its subcellular location is the secreted. The protein localises to the cell surface. The catalysed reaction is (2R)-2-phosphoglycerate = phosphoenolpyruvate + H2O. It functions in the pathway carbohydrate degradation; glycolysis; pyruvate from D-glyceraldehyde 3-phosphate: step 4/5. Functionally, catalyzes the reversible conversion of 2-phosphoglycerate (2-PG) into phosphoenolpyruvate (PEP). It is essential for the degradation of carbohydrates via glycolysis. The chain is Enolase from Halorubrum lacusprofundi (strain ATCC 49239 / DSM 5036 / JCM 8891 / ACAM 34).